We begin with the raw amino-acid sequence, 423 residues long: Adenylosuccinate synthetase (423 aa).

Residues 13 to 19 and 41 to 43 contribute to the GTP site; these read GDEGKGK and GHT. Asp-14 acts as the Proton acceptor in catalysis. The Mg(2+) site is built by Asp-14 and Gly-41. Residues 14-17, 39-42, Thr-130, Arg-144, Gln-223, Thr-238, and Arg-302 contribute to the IMP site; these read DEGK and NAGH. His-42 serves as the catalytic Proton donor. 298 to 304 is a binding site for substrate; it reads SVTGRKR. Residues Arg-304 and 410 to 412 each bind GTP; that span reads SVG.

The protein belongs to the adenylosuccinate synthetase family. Homodimer. It depends on Mg(2+) as a cofactor.

The protein resides in the cytoplasm. It carries out the reaction IMP + L-aspartate + GTP = N(6)-(1,2-dicarboxyethyl)-AMP + GDP + phosphate + 2 H(+). It participates in purine metabolism; AMP biosynthesis via de novo pathway; AMP from IMP: step 1/2. In terms of biological role, plays an important role in the de novo pathway of purine nucleotide biosynthesis. Catalyzes the first committed step in the biosynthesis of AMP from IMP. This Porphyromonas gingivalis (strain ATCC BAA-308 / W83) protein is Adenylosuccinate synthetase.